The sequence spans 189 residues: GTPase NRas (189 aa).

GTP-binding positions include 10–18 (GAGGVGKSA) and 29–30 (VD). Positions 32–40 (YDPTIEDSY) match the Effector region motif. GTP is bound at residue 57-61 (DTAGQ). Serine 89 bears the Phosphoserine mark. Residue 116-119 (NKCD) participates in GTP binding. The hypervariable region stretch occupies residues 166–185 (YRMKKLNSSDDGTQGCLGLS). A Glycyl lysine isopeptide (Lys-Gly) (interchain with G-Cter in ubiquitin) cross-link involves residue lysine 170. Cysteine 181 carries S-palmitoyl cysteine lipidation. Cysteine 186 is lipidated: S-farnesyl cysteine. Positions 187 to 189 (AVM) are cleaved as a propeptide — removed in mature form.

The protein belongs to the small GTPase superfamily. Ras family. In terms of assembly, interacts (active GTP-bound form preferentially) with RGS14. Interacts (active GTP-bound form) with RASSF7. Interacts (active GTP-bound form) with both SHOC2 and PP1c (all isoforms) to form a tertiary complex; SHOC2 and PP1c preferably bind M-Ras/MRAS, but they also bind K-Ras/KRAS, N-Ras/NRAS and H-Ras/HRAS. Palmitoylated by the ZDHHC9-GOLGA7 complex. Depalmitoylated by ABHD17A, ABHD17B and ABHD17C. A continuous cycle of de- and re-palmitoylation regulates rapid exchange between plasma membrane and Golgi. Post-translationally, acetylation at Lys-104 prevents interaction with guanine nucleotide exchange factors (GEFs). In terms of processing, ubiquitinated by the BCR(LZTR1) E3 ubiquitin ligase complex at Lys-170 in a non-degradative manner, leading to inhibit Ras signaling by decreasing Ras association with membranes. Phosphorylation at Ser-89 enhances NRAS association with its downstream effectors.

The protein resides in the cell membrane. It localises to the golgi apparatus membrane. It carries out the reaction GTP + H2O = GDP + phosphate + H(+). Alternates between an inactive form bound to GDP and an active form bound to GTP. Activated by a guanine nucleotide-exchange factor (GEF) and inactivated by a GTPase-activating protein (GAP). Functionally, ras proteins bind GDP/GTP and possess intrinsic GTPase activity. The chain is GTPase NRas (NRAS) from Monodelphis domestica (Gray short-tailed opossum).